The following is a 195-amino-acid chain: Inner membrane-spanning protein YciB (195 aa).

5 helical membrane-spanning segments follow: residues 34–54 (IYGATATLILASVIVYGALWL), 65–85 (FTLGACLVLGGLTLAFHEDTF), 88–108 (WKAPLVNWLFALAFAGSHFIG), 131–151 (LNIAWVVFFLVCGFANLYVVF), and 160–180 (FKVFGSLGMTLLFLIGQGIFL).

This sequence belongs to the YciB family.

It is found in the cell inner membrane. In terms of biological role, plays a role in cell envelope biogenesis, maintenance of cell envelope integrity and membrane homeostasis. The chain is Inner membrane-spanning protein YciB from Pseudomonas paraeruginosa (strain DSM 24068 / PA7) (Pseudomonas aeruginosa (strain PA7)).